Reading from the N-terminus, the 300-residue chain is Nucleotide-binding protein Daci_5422 (300 aa).

10–17 (GMSGSGKS) contacts ATP. Position 59-62 (59-62 (DARS)) interacts with GTP.

This sequence belongs to the RapZ-like family.

In terms of biological role, displays ATPase and GTPase activities. The protein is Nucleotide-binding protein Daci_5422 of Delftia acidovorans (strain DSM 14801 / SPH-1).